A 193-amino-acid polypeptide reads, in one-letter code: dCTP deaminase (193 aa).

DCTP is bound by residues 110 to 115, D128, 136 to 138, Y171, K178, and Q182; these read RSSLAR and VLE. The Proton donor/acceptor role is filled by E138.

The protein belongs to the dCTP deaminase family. As to quaternary structure, homotrimer.

It catalyses the reaction dCTP + H2O + H(+) = dUTP + NH4(+). It participates in pyrimidine metabolism; dUMP biosynthesis; dUMP from dCTP (dUTP route): step 1/2. In terms of biological role, catalyzes the deamination of dCTP to dUTP. In Aeromonas hydrophila subsp. hydrophila (strain ATCC 7966 / DSM 30187 / BCRC 13018 / CCUG 14551 / JCM 1027 / KCTC 2358 / NCIMB 9240 / NCTC 8049), this protein is dCTP deaminase.